The sequence spans 350 residues: MEVRHNWTVVEVKALMDKPFMDLVFEAQLVHRQYQEANYVQVSTLLSIKTGACPEDCKYCPQSAHYRTDVDRERLMEVESVLDAAKKAKDSGSTRFCMGAAWKNPKERDMPYLLDMIKGVKDIGLETCMTLGMITSDQAGELSGAGLDYYNHNLDTSPEFYGNIITTRTYQDRLDTLSHVRDAGMKICSGGIIGMGESVNDRAGLFVELANLPQHPESVPVNMLVKVKGTPLEDAEDVDPFDFIRLIAVARIMMPESAVRLSAGRESMNEQMQALCFMAGTNSVFYGCKLLTTPNPDEDSDMQLFKKLGVNSHQVAQKPDEVQEHELLDRVAERVASRPDKNDLFYEASV.

A Radical SAM core domain is found at 38 to 256 (NYVQVSTLLS…IAVARIMMPE (219 aa)). [4Fe-4S] cluster-binding residues include cysteine 53, cysteine 57, and cysteine 60. [2Fe-2S] cluster-binding residues include cysteine 97, cysteine 128, cysteine 188, and arginine 260.

The protein belongs to the radical SAM superfamily. Biotin synthase family. In terms of assembly, homodimer. It depends on [4Fe-4S] cluster as a cofactor. Requires [2Fe-2S] cluster as cofactor.

It catalyses the reaction (4R,5S)-dethiobiotin + (sulfur carrier)-SH + 2 reduced [2Fe-2S]-[ferredoxin] + 2 S-adenosyl-L-methionine = (sulfur carrier)-H + biotin + 2 5'-deoxyadenosine + 2 L-methionine + 2 oxidized [2Fe-2S]-[ferredoxin]. Its pathway is cofactor biosynthesis; biotin biosynthesis; biotin from 7,8-diaminononanoate: step 2/2. Its function is as follows. Catalyzes the conversion of dethiobiotin (DTB) to biotin by the insertion of a sulfur atom into dethiobiotin via a radical-based mechanism. This chain is Biotin synthase, found in Aliivibrio salmonicida (strain LFI1238) (Vibrio salmonicida (strain LFI1238)).